The sequence spans 544 residues: Lysophosphatidylcholine acyltransferase 2 (544 aa).

Over 1–58 (MNRCAEAAAVAATVPGSGVGDAGLRPPMVPRQASFFPPPVPNPFVQQTTISASRRLQM) the chain is Cytoplasmic. The helical; Signal-anchor for type II membrane protein transmembrane segment at 59-79 (FLLGIILLPVRALLVGIILLL) threads the bilayer. Residues 80–544 (AWPFAVISTA…EEGTSDKKVD (465 aa)) are Lumenal-facing. Residues 146–151 (HSTFFD) carry the HXXXXD motif motif. Positions 220-223 (EGTC) match the EGTC motif motif. 2 consecutive EF-hand domains span residues 391–426 (PVSD…LCNP) and 428–463 (NTEE…SLGV). Ca(2+) is bound by residues Asp404, Asn406, Asp408, Ser410, Glu415, Asp441, Asp443, Asp445, Tyr447, and Glu452. Polar residues predominate over residues 520–532 (TAPSVASNKVSPE). The segment at 520-544 (TAPSVASNKVSPESQEEGTSDKKVD) is disordered.

It belongs to the 1-acyl-sn-glycerol-3-phosphate acyltransferase family. As to expression, highest expression is found in resident macrophages and casein-induced neutrophils followed by skin, colon, spleen and thioglycollate-induced macrophages. Detected in erythroleukemic cells but not in reticulocytes.

The protein localises to the endoplasmic reticulum membrane. The protein resides in the golgi apparatus membrane. It is found in the cell membrane. Its subcellular location is the lipid droplet. It carries out the reaction a 1-acyl-sn-glycero-3-phosphocholine + an acyl-CoA = a 1,2-diacyl-sn-glycero-3-phosphocholine + CoA. The catalysed reaction is a 1-O-alkyl-sn-glycero-3-phosphocholine + acetyl-CoA = a 1-O-alkyl-2-acetyl-sn-glycero-3-phosphocholine + CoA. It catalyses the reaction a 1-acyl-sn-glycero-3-phosphate + an acyl-CoA = a 1,2-diacyl-sn-glycero-3-phosphate + CoA. The enzyme catalyses a 1-O-(1Z-alkenyl)-sn-glycero-3-phosphocholine + an acyl-CoA = a 1-O-(1Z-alkenyl)-2-acyl-sn-glycero-3-phosphocholine + CoA. It carries out the reaction 1-O-octadecyl-sn-glycero-3-phosphocholine + acetyl-CoA = 1-O-octadecyl-2-acetyl-sn-glycero-3-phosphocholine + CoA. The catalysed reaction is 1-hexadecanoyl-sn-glycero-3-phosphocholine + acetyl-CoA = 1-hexadecanoyl-2-acetyl-sn-glycero-3-phosphocholine + CoA. It catalyses the reaction 1-octadecanoyl-sn-glycero-3-phosphocholine + acetyl-CoA = 1-octadecanoyl-2-acetyl-sn-glycero-3-phosphocholine + CoA. The enzyme catalyses a 1-O-(1Z-alkenyl)-sn-glycero-3-phosphocholine + acetyl-CoA = 1-O-(1Z)-alkenyl-2-acetyl-sn-glycero-3-phosphocholine + CoA. It carries out the reaction 1-O-hexadecyl-sn-glycero-3-phosphocholine + acetyl-CoA = 1-O-hexadecyl-2-acetyl-sn-glycero-3-phosphocholine + CoA. The catalysed reaction is 1-O-octadecyl-sn-glycero-3-phosphocholine + (5Z,8Z,11Z,14Z)-eicosatetraenoyl-CoA = 1-O-octadecyl-2-(5Z,8Z,11Z,14Z)-eicosatetraenoyl-sn-glycero-3-phosphocholine + CoA. It catalyses the reaction 1-hexadecanoyl-sn-glycero-3-phosphate + (9Z)-octadecenoyl-CoA = 1-hexadecanoyl-2-(9Z-octadecenoyl)-sn-glycero-3-phosphate + CoA. The enzyme catalyses 1-(9Z-octadecenoyl)-sn-glycero-3-phosphate + (9Z)-octadecenoyl-CoA = 1,2-di-(9Z-octadecenoyl)-sn-glycero-3-phosphate + CoA. It carries out the reaction 1-(9Z-octadecenoyl)-sn-glycero-3-phosphate + hexadecanoyl-CoA = 1-(9Z)-octadecenoyl-2-hexadecanoyl-sn-glycero-3-phosphate + CoA. The catalysed reaction is 1-heptadecanoyl-sn-glycero-3-phosphate + (9Z)-octadecenoyl-CoA = 1-heptadecanoyl-2-(9Z)-octadecenoyl-sn-glycero-3-phosphate + CoA. It catalyses the reaction 1-octadecanoyl-sn-glycero-3-phosphate + (9Z)-octadecenoyl-CoA = 1-octadecanoyl-2-(9Z-octadecenoyl)-sn-glycero-3-phosphate + CoA. The enzyme catalyses heptadecanoyl-CoA + 1-(9Z-octadecenoyl)-sn-glycero-3-phosphate = 1-(9Z)-octadecenoyl-2-heptadecanoyl-sn-glycero-3-phosphate + CoA. It carries out the reaction 1-(9Z-octadecenoyl)-sn-glycero-3-phosphate + (9Z,12Z)-octadecadienoyl-CoA = 1-(9Z)-octadecenoyl-2-(9Z,12Z)-octadecadienoyl-sn-glycero-3-phosphate + CoA. The catalysed reaction is 1-(9Z-octadecenoyl)-sn-glycero-3-phosphate + tetradecanoyl-CoA = 1-(9Z)-octadecenoyl-2-tetradecanoyl-sn-glycero-3-phosphate + CoA. It catalyses the reaction pentadecanoyl-CoA + 1-(9Z-octadecenoyl)-sn-glycero-3-phosphate = 1-(9Z)-octadecenoyl-2-pentadecanoyl-sn-glycero-3-phosphate + CoA. The enzyme catalyses nonadecanoyl-CoA + 1-(9Z-octadecenoyl)-sn-glycero-3-phosphate = 1-(9Z)-octadecenoyl-2-nonadecanoyl-sn-glycero-3-phosphate + CoA. It carries out the reaction 1-hexadecanoyl-sn-glycero-3-phosphocholine + (9Z)-octadecenoyl-CoA = 1-hexadecanoyl-2-(9Z-octadecenoyl)-sn-glycero-3-phosphocholine + CoA. The protein operates within lipid metabolism; phospholipid metabolism. Acetyltransferase activity is increased following acute inflammatory stimulation by lipopolysaccharide (LPS). Acyltransferase activity is unchanged. Functionally, exhibits both acyltransferase and acetyltransferase activities. Activity is calcium-dependent. Catalyzes the conversion of lysophosphatidylcholine (1-acyl-sn-glycero-3-phosphocholine or LPC) into phosphatidylcholine (1,2-diacyl-sn-glycero-3-phosphocholine or PC). Catalyzes the conversion 1-acyl-sn-glycerol-3-phosphate (lysophosphatidic acid or LPA) into 1,2-diacyl-sn-glycerol-3-phosphate (phosphatidic acid or PA) by incorporating an acyl moiety at the sn-2 position of the glycerol backbone. Involved in platelet-activating factor (PAF) biosynthesis by catalyzing the conversion of the PAF precursor, 1-O-alkyl-sn-glycero-3-phosphocholine (lyso-PAF) into 1-O-alkyl-2-acetyl-sn-glycero-3-phosphocholine (PAF). Also converts lyso-PAF to 1-O-alkyl-2-acyl-sn-glycero-3-phosphocholine (PC), a major component of cell membranes and a PAF precursor. Under resting conditions, acyltransferase activity is preferred. Upon acute inflammatory stimulus, acetyltransferase activity is enhanced and PAF synthesis increases. Involved in the regulation of lipid droplet number and size. The sequence is that of Lysophosphatidylcholine acyltransferase 2 (Lpcat2) from Mus musculus (Mouse).